Here is a 285-residue protein sequence, read N- to C-terminus: Bifunctional protein FolD (285 aa).

Residues 166–168 and Ile232 each bind NADP(+); that span reads GAS.

It belongs to the tetrahydrofolate dehydrogenase/cyclohydrolase family. In terms of assembly, homodimer.

It catalyses the reaction (6R)-5,10-methylene-5,6,7,8-tetrahydrofolate + NADP(+) = (6R)-5,10-methenyltetrahydrofolate + NADPH. The enzyme catalyses (6R)-5,10-methenyltetrahydrofolate + H2O = (6R)-10-formyltetrahydrofolate + H(+). The protein operates within one-carbon metabolism; tetrahydrofolate interconversion. Catalyzes the oxidation of 5,10-methylenetetrahydrofolate to 5,10-methenyltetrahydrofolate and then the hydrolysis of 5,10-methenyltetrahydrofolate to 10-formyltetrahydrofolate. In Photobacterium profundum (strain SS9), this protein is Bifunctional protein FolD.